Reading from the N-terminus, the 266-residue chain is 4-hydroxy-tetrahydrodipicolinate reductase (266 aa).

10–15 serves as a coordination point for NAD(+); it reads GPRGRM. Lys38 provides a ligand contact to NADP(+). NAD(+) is bound by residues 99–101 and 125–128; these read GTT and APNF. The active-site Proton donor/acceptor is the His155. His156 contributes to the (S)-2,3,4,5-tetrahydrodipicolinate binding site. Catalysis depends on Lys159, which acts as the Proton donor. 165–166 is a binding site for (S)-2,3,4,5-tetrahydrodipicolinate; the sequence is GT.

The protein belongs to the DapB family.

The protein resides in the cytoplasm. It carries out the reaction (S)-2,3,4,5-tetrahydrodipicolinate + NAD(+) + H2O = (2S,4S)-4-hydroxy-2,3,4,5-tetrahydrodipicolinate + NADH + H(+). The catalysed reaction is (S)-2,3,4,5-tetrahydrodipicolinate + NADP(+) + H2O = (2S,4S)-4-hydroxy-2,3,4,5-tetrahydrodipicolinate + NADPH + H(+). It functions in the pathway amino-acid biosynthesis; L-lysine biosynthesis via DAP pathway; (S)-tetrahydrodipicolinate from L-aspartate: step 4/4. Functionally, catalyzes the conversion of 4-hydroxy-tetrahydrodipicolinate (HTPA) to tetrahydrodipicolinate. The chain is 4-hydroxy-tetrahydrodipicolinate reductase from Bacillus cytotoxicus (strain DSM 22905 / CIP 110041 / 391-98 / NVH 391-98).